The following is a 357-amino-acid chain: DNA replication and repair protein RecF (357 aa).

30–37 provides a ligand contact to ATP; sequence GANGSGKT.

Belongs to the RecF family.

Its subcellular location is the cytoplasm. Functionally, the RecF protein is involved in DNA metabolism; it is required for DNA replication and normal SOS inducibility. RecF binds preferentially to single-stranded, linear DNA. It also seems to bind ATP. The polypeptide is DNA replication and repair protein RecF (Enterobacter sp. (strain 638)).